The following is a 508-amino-acid chain: uncharacterized protein (508 aa).

The chain crosses the membrane as a helical span at residues 7-29; sequence ALAIVLALILSLALPELLFQLYP.

Its subcellular location is the membrane. This is an uncharacterized protein from Archaeoglobus fulgidus (strain ATCC 49558 / DSM 4304 / JCM 9628 / NBRC 100126 / VC-16).